We begin with the raw amino-acid sequence, 52 residues long: MSLRPCLTPSSMQYSDIYIPTPTPTHHTHTPTPHPHPHTHTHTHHNPNPTLF.

The interval 1–52 (MSLRPCLTPSSMQYSDIYIPTPTPTHHTHTPTPHPHPHTHTHTHHNPNPTLF) is disordered. The span at 35–45 (PHPHTHTHTHH) shows a compositional bias: basic residues.

This is an uncharacterized protein from Saccharomyces cerevisiae (strain ATCC 204508 / S288c) (Baker's yeast).